Consider the following 118-residue polypeptide: uncharacterized protein (118 aa).

It belongs to the HesB/IscA family. Ycf83 subfamily.

This is an uncharacterized protein from Synechocystis sp. (strain ATCC 27184 / PCC 6803 / Kazusa).